A 362-amino-acid chain; its full sequence is Peptide chain release factor 1 (362 aa).

At glutamine 237 the chain carries N5-methylglutamine. The interval 279-305 is disordered; the sequence is RLQQAEDEKRRSEEESSRRNLVASGDR. A compositionally biased stretch (basic and acidic residues) spans 282-296; it reads QAEDEKRRSEEESSR.

This sequence belongs to the prokaryotic/mitochondrial release factor family. Methylated by PrmC. Methylation increases the termination efficiency of RF1.

It localises to the cytoplasm. Functionally, peptide chain release factor 1 directs the termination of translation in response to the peptide chain termination codons UAG and UAA. The chain is Peptide chain release factor 1 from Colwellia psychrerythraea (strain 34H / ATCC BAA-681) (Vibrio psychroerythus).